A 455-amino-acid polypeptide reads, in one-letter code: Asparagine--tRNA ligase (455 aa).

It belongs to the class-II aminoacyl-tRNA synthetase family. As to quaternary structure, homodimer.

It is found in the cytoplasm. The enzyme catalyses tRNA(Asn) + L-asparagine + ATP = L-asparaginyl-tRNA(Asn) + AMP + diphosphate + H(+). The chain is Asparagine--tRNA ligase from Lawsonia intracellularis (strain PHE/MN1-00).